We begin with the raw amino-acid sequence, 109 residues long: Translation initiation factor IF-1, chloroplastic (109 aa).

In terms of domain architecture, S1-like spans 18-93; that stretch reads KSLNQEKENL…TRGRIIYRLK (76 aa).

Belongs to the IF-1 family. As to quaternary structure, component of the 30S ribosomal translation pre-initiation complex which assembles on the 30S ribosome in the order IF-2 and IF-3, IF-1 and N-formylmethionyl-tRNA(fMet); mRNA recruitment can occur at any time during PIC assembly.

It is found in the plastid. The protein localises to the chloroplast. Its function is as follows. One of the essential components for the initiation of protein synthesis. Stabilizes the binding of IF-2 and IF-3 on the 30S subunit to which N-formylmethionyl-tRNA(fMet) subsequently binds. Helps modulate mRNA selection, yielding the 30S pre-initiation complex (PIC). Upon addition of the 50S ribosomal subunit IF-1, IF-2 and IF-3 are released leaving the mature 70S translation initiation complex. The chain is Translation initiation factor IF-1, chloroplastic from Tupiella akineta (Green alga).